A 337-amino-acid chain; its full sequence is Anthranilate phosphoribosyltransferase (337 aa).

5-phospho-alpha-D-ribose 1-diphosphate is bound by residues G80, 83–84, T88, 90–93, 108–116, and S120; these read GD, NIST, and KHGNRAVSS. G80 serves as a coordination point for anthranilate. Mg(2+) is bound at residue S92. An anthranilate-binding site is contributed by N111. R166 lines the anthranilate pocket. Mg(2+) is bound by residues D224 and E225.

The protein belongs to the anthranilate phosphoribosyltransferase family. Homodimer. Requires Mg(2+) as cofactor.

It catalyses the reaction N-(5-phospho-beta-D-ribosyl)anthranilate + diphosphate = 5-phospho-alpha-D-ribose 1-diphosphate + anthranilate. It participates in amino-acid biosynthesis; L-tryptophan biosynthesis; L-tryptophan from chorismate: step 2/5. Its function is as follows. Catalyzes the transfer of the phosphoribosyl group of 5-phosphorylribose-1-pyrophosphate (PRPP) to anthranilate to yield N-(5'-phosphoribosyl)-anthranilate (PRA). The sequence is that of Anthranilate phosphoribosyltransferase from Anaeromyxobacter dehalogenans (strain 2CP-1 / ATCC BAA-258).